The sequence spans 782 residues: uncharacterized protein (782 aa).

A DNA-binding region (zn(2)-C6 fungal-type) is located at residues 22–50 (CRECHRLKLKCDRVWPCENCKKRGIPNLC). Disordered stretches follow at residues 105–126 (GEKP…DPDH) and 645–665 (VPSS…AEKA). Residues 654 to 665 (SPDDSSMRAEKA) show a composition bias toward basic and acidic residues.

Its subcellular location is the nucleus. This is an uncharacterized protein from Schizosaccharomyces pombe (strain 972 / ATCC 24843) (Fission yeast).